The following is a 358-amino-acid chain: tRNA-specific 2-thiouridylase MnmA (358 aa).

Residues 6-13 (AMSGGVDS) and Leu32 contribute to the ATP site. The Nucleophile role is filled by Cys101. A disulfide bridge links Cys101 with Cys193. Gly125 contacts ATP. The interval 143–145 (KDQ) is interaction with tRNA. The active-site Cysteine persulfide intermediate is Cys193.

It belongs to the MnmA/TRMU family.

The protein localises to the cytoplasm. The enzyme catalyses S-sulfanyl-L-cysteinyl-[protein] + uridine(34) in tRNA + AH2 + ATP = 2-thiouridine(34) in tRNA + L-cysteinyl-[protein] + A + AMP + diphosphate + H(+). Functionally, catalyzes the 2-thiolation of uridine at the wobble position (U34) of tRNA, leading to the formation of s(2)U34. This chain is tRNA-specific 2-thiouridylase MnmA, found in Mycobacterium leprae (strain Br4923).